A 292-amino-acid chain; its full sequence is Syntaxin-19 (292 aa).

In terms of domain architecture, t-SNARE coiled-coil homology spans 207–269 (LSEIEQRHKE…NNTKEKFGLA (63 aa)).

This sequence belongs to the syntaxin family. Interacts with EGFR. As to expression, expressed in stomach, lung and skin (at protein level). In stomach, strongly expressed in the mucosa of the fundus, in epithelial cells of gastric pits, and in gastric glands (at protein level). In skin, expressed in the epidermis, dermis, and epithelial layer of the hair bulb (at protein level).

It localises to the cell membrane. The protein localises to the cytoplasm. Functionally, plays a role in endosomal trafficking of the epidermal growth factor receptor (EGFR). In Mus musculus (Mouse), this protein is Syntaxin-19.